Reading from the N-terminus, the 1304-residue chain is DNA-directed RNA polymerase subunit beta' (1304 aa).

Residues cysteine 60, cysteine 62, cysteine 75, and cysteine 78 each coordinate Zn(2+). Aspartate 541, aspartate 543, and aspartate 545 together coordinate Mg(2+). Zn(2+)-binding residues include cysteine 887, cysteine 963, cysteine 970, and cysteine 973.

This sequence belongs to the RNA polymerase beta' chain family. As to quaternary structure, the RNAP catalytic core consists of 2 alpha, 1 beta, 1 beta' and 1 omega subunit. When a sigma factor is associated with the core the holoenzyme is formed, which can initiate transcription. The cofactor is Mg(2+). Requires Zn(2+) as cofactor.

It carries out the reaction RNA(n) + a ribonucleoside 5'-triphosphate = RNA(n+1) + diphosphate. In terms of biological role, DNA-dependent RNA polymerase catalyzes the transcription of DNA into RNA using the four ribonucleoside triphosphates as substrates. This chain is DNA-directed RNA polymerase subunit beta', found in Acidothermus cellulolyticus (strain ATCC 43068 / DSM 8971 / 11B).